A 384-amino-acid chain; its full sequence is Actin-binding Rho-activating protein (384 aa).

Residues 1-11 (MARGEKGRGEG) show a composition bias toward basic and acidic residues. 3 disordered regions span residues 1–20 (MARGEKGRGEGPAKSALRKV), 32–159 (GWQQ…SPTR), and 181–211 (EQEELKCRSDSIDTEDSGYGGETEERPEQDG). Residues 35 to 47 (QWANENSTRQAQE) show a composition bias toward polar residues. Positions 134 to 145 (DGDEPEPEQPES) are enriched in acidic residues. A phosphoserine mark is found at Ser-156 and Ser-191. Actin-binding stretches follow at residues 202 to 302 (ETEE…AERA) and 303 to 384 (KRAE…TLLK). Interaction with actin regions lie at residues 243-288 (SQVG…GDEG) and 355-384 (MRARKHGLVDFEGEMLWQGRDDHVVITLLK).

In terms of assembly, binds F-actin and ABLIM1, ABLIM2 and ABLIM3. Interaction with ABLIM2 and ABLIM3 enhances activity. In terms of tissue distribution, specifically expressed in heart and skeletal muscles.

It localises to the cytoplasm. The protein resides in the myofibril. Its subcellular location is the sarcomere. It is found in the cytoskeleton. In terms of biological role, acts as an activator of serum response factor (SRF)-dependent transcription possibly by inducing nuclear translocation of MKL1 or MKL2 and through a mechanism requiring Rho-actin signaling. The sequence is that of Actin-binding Rho-activating protein (ABRA) from Sus scrofa (Pig).